The sequence spans 276 residues: Tryptase beta-2 (276 aa).

Residues 1–21 (MLKRRLLLLWALSLLASLVYS) form the signal peptide. Positions 22-31 (APRPANQRVG) are cleaved as a propeptide — activation peptide. The region spanning 32-273 (IVGGHEASES…YLDWIHRYVP (242 aa)) is the Peptidase S1 domain. A disulfide bond links C60 and C76. Residue H75 is the Charge relay system of the active site. The residue at position 98 (Y98) is a Phosphotyrosine. Catalysis depends on D122, which acts as the Charge relay system. N-linked (GlcNAc...) asparagine glycosylation occurs at N133. Disulfide bonds link C156–C231, C189–C212, and C221–C249. S225 serves as the catalytic Charge relay system.

Belongs to the peptidase S1 family. Tryptase subfamily. In terms of assembly, homotetramer. The active tetramer is converted to inactive monomers at neutral and acidic pH in the absence of heparin. Low concentrations of inactive monomers become active monomers at pH 6.0 in the presence of heparin. When the concentration of active monomers is higher, they convert to active monomers and then to active tetramers. These monomers are active and functionally distinct from the tetrameric enzyme. In contrast to the hidden active sites in the tetrameric form, the active site of the monomeric form is accessible for macromolecular proteins and inhibitors, e.g. fibrinogen which is a substrate for the monomeric but not for the tetrameric form. The monomeric form forms a complex with SERPINB6. In terms of tissue distribution, during embryogenesis, detected primarily in skin.

The protein localises to the secreted. The enzyme catalyses Preferential cleavage: Arg-|-Xaa, Lys-|-Xaa, but with more restricted specificity than trypsin.. In terms of biological role, tryptase is the major neutral protease present in mast cells and is secreted upon the coupled activation-degranulation response of this cell type. Plays a role in innate immunity. This chain is Tryptase beta-2 (Tpsb2), found in Mus musculus (Mouse).